The following is a 195-amino-acid chain: Imidazole glycerol phosphate synthase subunit HisH (195 aa).

Positions 1–195 constitute a Glutamine amidotransferase type-1 domain; sequence MIAVVDLGIG…LRLLENFRRL (195 aa). Catalysis depends on cysteine 72, which acts as the Nucleophile. Residues histidine 177 and glutamate 179 contribute to the active site.

As to quaternary structure, heterodimer of HisH and HisF.

It is found in the cytoplasm. The catalysed reaction is 5-[(5-phospho-1-deoxy-D-ribulos-1-ylimino)methylamino]-1-(5-phospho-beta-D-ribosyl)imidazole-4-carboxamide + L-glutamine = D-erythro-1-(imidazol-4-yl)glycerol 3-phosphate + 5-amino-1-(5-phospho-beta-D-ribosyl)imidazole-4-carboxamide + L-glutamate + H(+). The enzyme catalyses L-glutamine + H2O = L-glutamate + NH4(+). Its pathway is amino-acid biosynthesis; L-histidine biosynthesis; L-histidine from 5-phospho-alpha-D-ribose 1-diphosphate: step 5/9. IGPS catalyzes the conversion of PRFAR and glutamine to IGP, AICAR and glutamate. The HisH subunit catalyzes the hydrolysis of glutamine to glutamate and ammonia as part of the synthesis of IGP and AICAR. The resulting ammonia molecule is channeled to the active site of HisF. This chain is Imidazole glycerol phosphate synthase subunit HisH, found in Thermococcus kodakarensis (strain ATCC BAA-918 / JCM 12380 / KOD1) (Pyrococcus kodakaraensis (strain KOD1)).